The primary structure comprises 576 residues: CTP synthase (576 aa).

Positions 305 to 559 (QIALVGKYTH…LGLVAAAANI (255 aa)) constitute a Glutamine amidotransferase type-1 domain. Catalysis depends on for GATase activity residues C404, H535, and E537.

It belongs to the CTP synthase family.

It catalyses the reaction UTP + L-glutamine + ATP + H2O = CTP + L-glutamate + ADP + phosphate + 2 H(+). The protein operates within pyrimidine metabolism; CTP biosynthesis via de novo pathway; CTP from UDP: step 2/2. In terms of biological role, catalyzes the ATP-dependent amination of UTP to CTP with either L-glutamine or ammonia as the source of nitrogen. The sequence is that of CTP synthase (URA7) from Eremothecium gossypii (strain ATCC 10895 / CBS 109.51 / FGSC 9923 / NRRL Y-1056) (Yeast).